The following is a 262-amino-acid chain: Type III pantothenate kinase (262 aa).

7-14 (DIGNTRLK) contributes to the ATP binding site. Residues tyrosine 96 and 103-106 (GSDR) contribute to the substrate site. The active-site Proton acceptor is the aspartate 105. Residue threonine 137 coordinates ATP. Threonine 187 is a substrate binding site.

It belongs to the type III pantothenate kinase family. In terms of assembly, homodimer. NH4(+) serves as cofactor. It depends on K(+) as a cofactor.

The protein resides in the cytoplasm. The catalysed reaction is (R)-pantothenate + ATP = (R)-4'-phosphopantothenate + ADP + H(+). It participates in cofactor biosynthesis; coenzyme A biosynthesis; CoA from (R)-pantothenate: step 1/5. Its function is as follows. Catalyzes the phosphorylation of pantothenate (Pan), the first step in CoA biosynthesis. This Leptothrix cholodnii (strain ATCC 51168 / LMG 8142 / SP-6) (Leptothrix discophora (strain SP-6)) protein is Type III pantothenate kinase.